The primary structure comprises 329 residues: MHNLTLFESGGDNVSCGGSSLGCPNGSSLAPLPLPQPLAVAVPVVYGVICAVGLAGNSAVLYVLLRTPRMKTVTNVFILNLAIADELFTLVLPINIADFLLRRWPFGEVMCKLIVAVDQYNTFSSLYFLAVMSADRYLVVLATAESRRVSGRTYGAARAVSLAVWALVTLVVLPFAVFARLDEEQGRRQCVLVFPQPEAFWWRASRLYTLVLGFAIPVTTICALYTTLLCRLRAIQLDSHAKALDRAKKRVTLLVAAILAVCLLCWTPYHLSTIVALTTDLPQTPLVIGISYFITSLSYANSCLNPFLYAFLDDSFRRSLRQLVSCRSA.

Residues 1–43 (MHNLTLFESGGDNVSCGGSSLGCPNGSSLAPLPLPQPLAVAVP) lie on the Extracellular side of the membrane. 3 N-linked (GlcNAc...) asparagine glycosylation sites follow: N3, N13, and N25. Residues 44 to 64 (VVYGVICAVGLAGNSAVLYVL) traverse the membrane as a helical segment. Topologically, residues 65–75 (LRTPRMKTVTN) are cytoplasmic. The chain crosses the membrane as a helical span at residues 76 to 96 (VFILNLAIADELFTLVLPINI). The Extracellular segment spans residues 97 to 112 (ADFLLRRWPFGEVMCK). C111 and C190 are disulfide-bonded. A helical membrane pass occupies residues 113–133 (LIVAVDQYNTFSSLYFLAVMS). Residues 134–158 (ADRYLVVLATAESRRVSGRTYGAAR) are Cytoplasmic-facing. Residues 159–179 (AVSLAVWALVTLVVLPFAVFA) traverse the membrane as a helical segment. Residues 180–209 (RLDEEQGRRQCVLVFPQPEAFWWRASRLYT) are Extracellular-facing. A helical membrane pass occupies residues 210–230 (LVLGFAIPVTTICALYTTLLC). Over 231 to 250 (RLRAIQLDSHAKALDRAKKR) the chain is Cytoplasmic. A helical transmembrane segment spans residues 251–271 (VTLLVAAILAVCLLCWTPYHL). Topologically, residues 272-289 (STIVALTTDLPQTPLVIG) are extracellular. The helical transmembrane segment at 290 to 312 (ISYFITSLSYANSCLNPFLYAFL) threads the bilayer. The Cytoplasmic segment spans residues 313–329 (DDSFRRSLRQLVSCRSA).

The protein belongs to the G-protein coupled receptor 1 family.

The protein localises to the cell membrane. In terms of biological role, interacts specifically with a number of opioid ligands. Receptor for neuropeptides B and W, which may be involved in neuroendocrine system regulation, food intake and the organization of other signals. This is Neuropeptides B/W receptor type 1 (Npbwr1) from Mus musculus (Mouse).